The chain runs to 850 residues: Pentatricopeptide repeat-containing protein At5g16860 (850 aa).

PPR repeat units lie at residues 58–88, 91–125, 126–160, 161–191, 192–227, 228–262, 263–293, 294–328, 329–363, 364–398, 406–436, 439–473, 476–510, 512–542, 543–577, 578–608, and 614–644; these read TLNL…FPPS, GVYH…SWTP, DNYT…GFIS, NVFV…MSVW, DVVS…GCRP, DNIT…EMIQ, NMFV…MSVK, DVVS…KIKM, DVVT…GIKP, NEVT…PIDL, ENMV…LSPK, DVVT…DCQT, NAFT…QQNA, PLFV…MMAK, NEVT…GFKL, DGVT…MKTV, and GPEH…MPME. The type E motif stretch occupies residues 649–724; it reads VWVAFLSCCR…RPGCSWVEGI (76 aa). Residues 725 to 755 form a type E(+) motif region; sequence KGTTTFFVGDKTHPHAKEIYQVLLDHMQRIK. The tract at residues 756 to 850 is type DYW motif; sequence DIGYVPETGF…NGSCSCKGYW (95 aa).

This sequence belongs to the PPR family. PCMP-H subfamily.

The sequence is that of Pentatricopeptide repeat-containing protein At5g16860 (PCMP-H92) from Arabidopsis thaliana (Mouse-ear cress).